A 221-amino-acid polypeptide reads, in one-letter code: Sigma non-opioid intracellular receptor 1 (221 aa).

Residues 1 to 4 (MALW) are Lumenal-facing. The chain crosses the membrane as a helical span at residues 5 to 27 (RGLRAVLAVAGLAVAVQLLRGWL). At 28–221 (GSKSYVFNRE…STHLSELGFF (194 aa)) the chain is on the cytoplasmic side. Residues 96 to 103 (SLTEYVLL) form an important for ligand-binding region. Residues 174–221 (FIPSTLGFALADTIFSTQDFLTLFYTVKVYGKALLLETSTHLSELGFF) form a C-terminal hydrophobic region region.

It belongs to the ERG2 family. Homotrimer.

The protein resides in the nucleus inner membrane. It localises to the nucleus outer membrane. The protein localises to the nucleus envelope. It is found in the cytoplasmic vesicle. Its subcellular location is the endoplasmic reticulum membrane. The protein resides in the membrane. In terms of biological role, may function in lipid transport from the endoplasmic reticulum and be involved in a wide array of cellular functions probably through regulation of the biogenesis of lipid microdomains at the plasma membrane. May regulate calcium efflux at the endoplasmic reticulum. In Xenopus tropicalis (Western clawed frog), this protein is Sigma non-opioid intracellular receptor 1 (sigmar1).